Consider the following 330-residue polypeptide: Short chain dehydrogenase yanD (330 aa).

Residues Lys57, Asp86, Asn113, Tyr204, and Lys208 each contribute to the NADP(+) site. The active-site Proton donor is the Tyr204. Lys208 serves as the catalytic Lowers pKa of active site Tyr.

It belongs to the short-chain dehydrogenases/reductases (SDR) family.

The protein operates within secondary metabolite biosynthesis; terpenoid biosynthesis. Functionally, short chain dehydrogenase; part of the gene cluster that mediates the biosynthesis of yanuthone D, a fungal isoprenoid epoxycyclohexenone that acts as an antibiotic against fungi and bacteria. The first step of the pathway is the synthesis of 6-methylsalicylic acid (6-MSA) by the polyketide synthase yanA. 6-MSA is then converted to m-cresol by the decarboxylase yanB. The cytochrome P450 monooxygenase yanC then catalyzes the oxidation of m-cresol to toluquinol. Epoxidation of toluquinol is then performed by the short chain dehydrogenase yanD, with the help of yanE, and a further prenylation by yanG leads to 7-deacetoxyyanuthone A. The next step is the hydroxylation of C-22 of 7-deacetoxyyanuthone A by the cytochrome P450 monooxygenase yanH to yield 22-deacetylyanuthone A. O-Mevalon transferase yanI then attaches mevalon to the hydroxyl group of 22-deacetylyanuthone A to produce yanuthone E. Finally, the FAD-dependent monooxygenase yanF oxidizes the hydroxyl group at C15 of yanuthone E to form yanuthone D. Furthermore, several branching points in the pathway lead to the production of yanuthones F and G from 7-deacetoxyyanuthone A; yanuthones H and I from 22-deacetylyanuthone A; and yanuthone J from yanuthone E. YanD is also involved in the synthesis of yanuthone X1 which does not have 6-methylsalicylic acid (6-MSA) as precursor. The sequence is that of Short chain dehydrogenase yanD from Aspergillus niger (strain ATCC 1015 / CBS 113.46 / FGSC A1144 / LSHB Ac4 / NCTC 3858a / NRRL 328 / USDA 3528.7).